The sequence spans 284 residues: MKVFILALLALTATTAIAQLDTTCSQGFRQYQQQQQPGQRQLLEQMRPCVAFLQQQCRPLRMPFLQTQVEQLSSCQIDQYQCCQQLAQIPEQIRCHAIHNVVEAIMQQQSQQHRQERQQQAQHKSMRMLLETLYLMCNIYVPIQCQQQQQLGQQQQQQLQEQLTPCATFLQHQCSPVTVPFPQIRVDQPTSCQNVQHQCCRQLSQIPEQYRCQAIHNVAEAIRHQQPQQQCQGMYQPQQPAKLESIRMSLQALRSMCRIYIPVQCPAPTAYNIPMVATYTGGAC.

Residues 1-18 form the signal peptide; it reads MKVFILALLALTATTAIA.

Belongs to the prolamin family. Post-translationally, contains disulfide bonds.

Its function is as follows. Seed storage protein. Might be integrated via inter-chain disulfide bonds within the glutenin polymer. This is Avenin-like b11 from Triticum aestivum (Wheat).